Here is a 541-residue protein sequence, read N- to C-terminus: Capsid protein VP1 (541 aa).

The interval 1-224 is shell domain; it reads MRMSDGAAPK…FVYLTPPIER (224 aa). The segment at 225 to 277 is P1 sub-domain 1; that stretch reads TIYRMVDLPVIQPRLCTHARWPAPVYGLLVDPSLPSNPQWQNGRVHVDGTLLG. Positions 225–541 are protruding domain; sequence TIYRMVDLPV…SLATGRMLKQ (317 aa). A P2 sub-domain region spans residues 278–416; sequence TTPISGSWVS…EYNDGLLVPL (139 aa). The tract at residues 298-366 is interaction with host receptor CD300LF; sequence QSGTGEVATF…MILGPTTNAD (69 aa). The segment at 417-541 is P1 sub-domain 2; it reads APPIGPFLPG…SLATGRMLKQ (125 aa).

This sequence belongs to the caliciviridae capsid protein family. Homodimer. Homomultimer. Interacts with the minor capsid protein VP2. Interacts (via P2 subdomain) with host receptor CD300LF (via N-terminus); this interaction requires Mg(2+) and Ca(2+), and allows viral binding and entry into the host cell. Stochioimetry is 2:2. Bile acids interact with the P domain dimer interface and act as cofactors enhancing virus binding and infectivity. Interacts with host receptor CD300LD; this interaction allows viral binding and entry into the host cell.

Its subcellular location is the virion. The protein localises to the host cytoplasm. Its function is as follows. Capsid protein self assembles to form an icosahedral capsid with a T=3 symmetry, about 38 nm in diameter, and consisting of 180 capsid proteins. A smaller form of capsid with a diameter of 23 nm might be capsid proteins assembled as icosahedron with T=1 symmetry. The capsid encapsulates the genomic RNA and is decorated with VP2 proteins. Mediates virion attachment to the host cell receptor CD300LF. The sequence is that of Capsid protein VP1 from Norovirus (isolate Mouse/NoV/United States/MNV1/2002/GV) (MNV-1).